We begin with the raw amino-acid sequence, 467 residues long: Uronate isomerase (467 aa).

This sequence belongs to the metallo-dependent hydrolases superfamily. Uronate isomerase family.

The catalysed reaction is D-glucuronate = D-fructuronate. The enzyme catalyses aldehydo-D-galacturonate = keto-D-tagaturonate. It participates in carbohydrate metabolism; pentose and glucuronate interconversion. This is Uronate isomerase from Histophilus somni (strain 2336) (Haemophilus somnus).